The primary structure comprises 393 residues: Phosphoglycerate kinase (393 aa).

Substrate contacts are provided by residues 21 to 23 (DMN), R36, 59 to 62 (HLGR), R114, and R147. Residues K198, E320, and 346 to 349 (GGDT) each bind ATP.

The protein belongs to the phosphoglycerate kinase family. In terms of assembly, monomer.

The protein localises to the cytoplasm. It catalyses the reaction (2R)-3-phosphoglycerate + ATP = (2R)-3-phospho-glyceroyl phosphate + ADP. The protein operates within carbohydrate degradation; glycolysis; pyruvate from D-glyceraldehyde 3-phosphate: step 2/5. The polypeptide is Phosphoglycerate kinase (Thiobacillus denitrificans (strain ATCC 25259 / T1)).